The primary structure comprises 110 residues: Nucleoid-associated protein PERMA_0533 (110 aa).

The protein belongs to the YbaB/EbfC family. As to quaternary structure, homodimer.

The protein localises to the cytoplasm. Its subcellular location is the nucleoid. In terms of biological role, binds to DNA and alters its conformation. May be involved in regulation of gene expression, nucleoid organization and DNA protection. This Persephonella marina (strain DSM 14350 / EX-H1) protein is Nucleoid-associated protein PERMA_0533.